The sequence spans 658 residues: Alkyldihydroxyacetonephosphate synthase, peroxisomal (658 aa).

Low complexity predominate over residues 1 to 24 (MAEAAAAAAAAAAAGETSASSGSA). A disordered region spans residues 1 to 37 (MAEAAAAAAAAAAAGETSASSGSAAERDPDQDRAGRR). Residues 1–58 (MAEAAAAAAAAAAAGETSASSGSAAERDPDQDRAGRRLRVLSGHLLGRPQEALSTNEC) constitute a peroxisome transit peptide. The segment covering 25 to 35 (AERDPDQDRAG) has biased composition (basic and acidic residues). A Phosphoserine modification is found at serine 65. Threonine 74 carries the phosphothreonine modification. Lysine 102 is modified (N6-acetyllysine). Residues 202–384 (FERIPDIVLW…TEATIKIRPT (183 aa)) form the FAD-binding PCMH-type domain. FAD-binding positions include 234 to 240 (PIGGGTS), 303 to 309 (DSLEFST), and 316 to 319 (TRAS). Lysine 347 is modified (N6-acetyllysine). 368-374 (EGTLGVI) contacts FAD. Arginine 515 serves as a coordination point for substrate. The Proton donor/acceptor role is filled by tyrosine 578. 2 important for enzyme activity regions span residues 615 to 617 (HHH) and 654 to 658 (NRNLL).

Belongs to the FAD-binding oxidoreductase/transferase type 4 family. In terms of assembly, homodimer. The cofactor is FAD.

The protein localises to the peroxisome membrane. It is found in the peroxisome. The enzyme catalyses a long chain fatty alcohol + a 1-acylglycerone 3-phosphate = a 1-O-alkylglycerone 3-phosphate + a long-chain fatty acid + H(+). It carries out the reaction hexadecan-1-ol + 1-hexadecanoylglycerone 3-phosphate = 1-O-hexadecylglycerone 3-phosphate + hexadecanoate + H(+). It catalyses the reaction 1-hexadecanoylglycerone 3-phosphate + a long-chain fatty acid = a 1-acylglycerone 3-phosphate + hexadecanoate. The protein operates within glycerolipid metabolism; ether lipid biosynthesis. Its activity is regulated as follows. Inhibited by N-ethylmaleimide, p-bromophenacylbromide, 2,4- dinitrofluorobenzene and divalent cations such as such as Mn(2+), Mg(2+) and Zn(2+). Inhibition by p-bromophenacylbromide is strongly pH dependent and is highest at alkaline conditions. Its function is as follows. Catalyzes the exchange of the acyl chain in acyl-dihydroxyacetonephosphate (acyl-DHAP) for a long chain fatty alcohol, yielding the first ether linked intermediate, i.e. alkyl-dihydroxyacetonephosphate (alkyl-DHAP), in the pathway of ether lipid biosynthesis. The sequence is that of Alkyldihydroxyacetonephosphate synthase, peroxisomal (AGPS) from Cavia porcellus (Guinea pig).